A 787-amino-acid polypeptide reads, in one-letter code: Protein translocase subunit SecA (787 aa).

ATP is bound by residues glutamine 85, 103-107 (GEGKT), and aspartate 492.

The protein belongs to the SecA family. As to quaternary structure, monomer and homodimer. Part of the essential Sec protein translocation apparatus which comprises SecA, SecYEG and auxiliary proteins SecDF. Other proteins may also be involved.

The protein resides in the cell membrane. It localises to the cytoplasm. The enzyme catalyses ATP + H2O + cellular proteinSide 1 = ADP + phosphate + cellular proteinSide 2.. In terms of biological role, part of the Sec protein translocase complex. Interacts with the SecYEG preprotein conducting channel. Has a central role in coupling the hydrolysis of ATP to the transfer of proteins into and across the cell membrane, serving as an ATP-driven molecular motor driving the stepwise translocation of polypeptide chains across the membrane. The chain is Protein translocase subunit SecA from Lactiplantibacillus plantarum (strain ATCC BAA-793 / NCIMB 8826 / WCFS1) (Lactobacillus plantarum).